The primary structure comprises 389 residues: 23S rRNA (uracil(747)-C(5))-methyltransferase RlmC (389 aa).

Positions 5, 13, 16, and 94 each coordinate [4Fe-4S] cluster. 4 residues coordinate S-adenosyl-L-methionine: glutamine 219, phenylalanine 248, glutamate 275, and asparagine 321. The Nucleophile role is filled by cysteine 348.

Belongs to the class I-like SAM-binding methyltransferase superfamily. RNA M5U methyltransferase family. RlmC subfamily.

The enzyme catalyses uridine(747) in 23S rRNA + S-adenosyl-L-methionine = 5-methyluridine(747) in 23S rRNA + S-adenosyl-L-homocysteine + H(+). Catalyzes the formation of 5-methyl-uridine at position 747 (m5U747) in 23S rRNA. This Mannheimia succiniciproducens (strain KCTC 0769BP / MBEL55E) protein is 23S rRNA (uracil(747)-C(5))-methyltransferase RlmC.